The following is a 468-amino-acid chain: Pancreatic lipase-related protein 2 (468 aa).

Residues Met-1 to Gly-16 form the signal peptide. Cys-20 and Cys-26 form a disulfide bridge. Residues Val-92–Leu-104 form a required for galactolipase activity region. A disulfide bond links Cys-108 and Cys-119. The active-site Nucleophile is Ser-170. The Charge relay system role is filled by Asp-194. Residues Glu-205, Arg-208, Asp-210, and Asp-213 each coordinate Ca(2+). The cysteines at positions 255 and 279 are disulfide-linked. The tract at residues Gln-256–Ala-278 is required for galactolipase activity. His-281 acts as the Charge relay system in catalysis. Intrachain disulfides connect Cys-303–Cys-314 and Cys-317–Cys-322. 2 N-linked (GlcNAc...) asparagine glycosylation sites follow: Asn-352 and Asn-427. The PLAT domain maps to Trp-356–Cys-468. Cys-452 and Cys-468 are oxidised to a cystine.

It belongs to the AB hydrolase superfamily. Lipase family. Expressed in pancreatic acinar cells (at protein level).

The protein resides in the secreted. Its subcellular location is the zymogen granule membrane. The protein localises to the cell projection. It localises to the neuron projection. It carries out the reaction a triacylglycerol + H2O = a diacylglycerol + a fatty acid + H(+). It catalyses the reaction a 1,2-diacyl-3-O-(beta-D-galactosyl)-sn-glycerol + 2 H2O = 3-beta-D-galactosyl-sn-glycerol + 2 a fatty acid + 2 H(+). The catalysed reaction is 1,2,3-tri-(9Z-octadecenoyl)-glycerol + H2O = di-(9Z)-octadecenoylglycerol + (9Z)-octadecenoate + H(+). The enzyme catalyses di-(9Z)-octadecenoylglycerol + H2O = (9Z-octadecenoyl)-glycerol + (9Z)-octadecenoate + H(+). It carries out the reaction (9Z-octadecenoyl)-glycerol + H2O = glycerol + (9Z)-octadecenoate + H(+). It catalyses the reaction 1-(9Z-octadecenoyl)-glycerol + H2O = glycerol + (9Z)-octadecenoate + H(+). The catalysed reaction is 1,2,3-tripropanoylglycerol + H2O = dipropanoylglycerol + propanoate + H(+). The enzyme catalyses 1,2,3-tributanoylglycerol + H2O = dibutanoylglycerol + butanoate + H(+). It carries out the reaction 1,2,3-trioctanoylglycerol + H2O = dioctanoylglycerol + octanoate + H(+). It catalyses the reaction 1,2-didecanoylglycerol + H2O = decanoylglycerol + decanoate + H(+). The catalysed reaction is long chain 1,2-diacyl-3-O-beta-D-galactosyl-sn-glycerol + H2O = long chain acyl-3-O-beta-D-galactosyl-sn-glycerol + a fatty acid + H(+). The enzyme catalyses 1,2-dioctanoyl-3-O-beta-D-galactosyl-sn-glycerol + H2O = octanoyl-3-(beta-D-galactosyl)-sn-glycerol + octanoate + H(+). It carries out the reaction 1,2-didodecanoyl-3-beta-D-galactosyl-sn-glycerol + H2O = dodecanoyl-3-beta-D-galactosyl-sn-glycerol + dodecanoate + H(+). It catalyses the reaction 1-beta-D-galactosyl-2,3-didodecanoyl-sn-glycerol + H2O = 1-beta-D-galactosyl-dodecanoyl-sn-glycerol + dodecanoate + H(+). The catalysed reaction is a 1,2-diacyl-3-O-[alpha-D-galactosyl-(1-&gt;6)-beta-D-galactosyl]-sn-glycerol + H2O = acyl-3-O-[alpha-D-galactosyl-(1-&gt;6)-beta-D-galactosyl]-sn-glycerol + a fatty acid + H(+). The enzyme catalyses long chain 1,2-diacyl-3-O-[alpha-D-galactosyl-(1-&gt;6)-beta-D-galactosyl]-sn-glycerol + H2O = long chain acyl-3-O-[alpha-D-galactosyl-(1-&gt;6)-beta-D-galactosyl]-sn-glycerol + a fatty acid + H(+). It carries out the reaction 1,2-dioctanoyl-3-O-[alpha-D-galactosyl-(1-&gt;6)-beta-D-galactosyl]-sn-glycerol + H2O = octanoyl-3-O-[alpha-D-galactosyl-(1-&gt;6)-beta-D-galactosyl]-sn-glycerol + octanoate + H(+). It catalyses the reaction 1,2-didodecanoyl-3-O-[alpha-D-galactosyl-(1-&gt;6)-beta-D-galactosyl]-sn-glycerol + H2O = dodecanoyl-3-O-[alpha-D-galactosyl-(1-&gt;6)-beta-D-galactosyl]-sn-glycerol + dodecanoate + H(+). The catalysed reaction is a 1,2-diacyl-sn-glycero-3-phosphocholine + H2O = a monoacyl-sn-glycero-3-phosphocholine + a fatty acid + H(+). The protein operates within glycerolipid metabolism; triacylglycerol degradation. It participates in glycolipid metabolism. CLPS stimulates triacylglycerol lipase activity. Triacylglycerol lipase activity is not inhibited by increasing bile salt concentration. Functionally, lipase that primarily hydrolyzes triglycerides and galactosylglycerides. In neonates, may play a major role in pancreatic digestion of dietary fats such as milk fat globules enriched in long-chain triglycerides. Hydrolyzes short-, medium- and long-chain fatty acyls in triglycerides without apparent positional specificity. Can completely deacylate triacylglycerols. When the liver matures and bile salt synthesis increases, likely functions mainly as a galactolipase and monoacylglycerol lipase. Hydrolyzes monogalactosyldiglycerols (MGDG) and digalactosyldiacylglycerols (DGDG) present in a plant-based diet, releasing long-chain polyunsaturated fatty acids. Hydrolyzes medium- and long-chain fatty acyls in galactolipids. May act together with LIPF to hydrolyze partially digested triglycerides. Hydrolyzes long-chain monoglycerides with high efficiency. In cytotoxic T cells, contributes to perforin-dependent cell lysis, but is unlikely to mediate direct cytotoxicity. Also has low phospholipase activity. In neurons, required for the localization of the phospholipid 1-oleoyl-2-palmitoyl-PC (OPPC) to neurite tips through acyl chain remodeling of membrane phospholipids. The resulting OPPC-rich lipid membrane domain recruits the t-SNARE protein STX4 by selectively interacting with the STX4 transmembrane domain and this promotes surface expression of the dopamine transporter SLC6A3/DAT at neurite tips by facilitating fusion of SLC6A3-containing transport vesicles with the plasma membrane. In Rattus norvegicus (Rat), this protein is Pancreatic lipase-related protein 2.